The chain runs to 435 residues: D-amino acid dehydrogenase (435 aa).

Residue 3 to 17 (VLILGSGVIGTTSAW) participates in FAD binding.

The protein belongs to the DadA oxidoreductase family. The cofactor is FAD.

It carries out the reaction a D-alpha-amino acid + A + H2O = a 2-oxocarboxylate + AH2 + NH4(+). Its pathway is amino-acid degradation; D-alanine degradation; NH(3) and pyruvate from D-alanine: step 1/1. Its function is as follows. Oxidative deamination of D-amino acids. This chain is D-amino acid dehydrogenase, found in Xylella fastidiosa (strain 9a5c).